The following is a 286-amino-acid chain: MANYPKELPAQTQSRQPGIESEMNPSPVYEYEDYKGADKLKGKVALITGGDSGIGRAVSVAYAKEGADIAIVYKDEHEDAEETKKRVEQEGVKCLLIAGDVGEEEFCNEAVEKTVKELGGLDILVNNAGEQHPKESIKDITSEQLHRTFKTNFYSQFYLTKKAIDYLKPGSAIINTTSINPYVGNPTLIDYTATKGAINAFTRTMAQALVKDGIRVNAVAPGPIWTPLIPATFPEETVAQFGQDTPMGRPGQPVEHVGCYVLLASDESSYMTGQTLHVNGGNFVTT.

The tract at residues 1–26 is disordered; the sequence is MANYPKELPAQTQSRQPGIESEMNPS. 46–70 is a binding site for NAD(+); it reads LITGGDSGIGRAVSVAYAKEGADIA. S178 is a binding site for substrate. Y191 acts as the Proton acceptor in catalysis.

This sequence belongs to the short-chain dehydrogenases/reductases (SDR) family.

This chain is General stress protein 39 (ydaD), found in Bacillus subtilis (strain 168).